A 294-amino-acid polypeptide reads, in one-letter code: Nucleotide-binding protein Dde_1774 (294 aa).

14-21 lines the ATP pocket; the sequence is GLSGAGKS. 66–69 serves as a coordination point for GTP; the sequence is DLRQ.

Belongs to the RapZ-like family.

Functionally, displays ATPase and GTPase activities. The chain is Nucleotide-binding protein Dde_1774 from Oleidesulfovibrio alaskensis (strain ATCC BAA-1058 / DSM 17464 / G20) (Desulfovibrio alaskensis).